A 105-amino-acid polypeptide reads, in one-letter code: Flagellar transcriptional regulator FlhD (105 aa).

This sequence belongs to the FlhD family. As to quaternary structure, homodimer; disulfide-linked. Forms a heterohexamer composed of two FlhC and four FlhD subunits. Each FlhC binds a FlhD dimer, forming a heterotrimer, and a hexamer assembles by dimerization of two heterotrimers.

The protein localises to the cytoplasm. In terms of biological role, functions in complex with FlhC as a master transcriptional regulator that regulates transcription of several flagellar and non-flagellar operons by binding to their promoter region. Activates expression of class 2 flagellar genes, including fliA, which is a flagellum-specific sigma factor that turns on the class 3 genes. Also regulates genes whose products function in a variety of physiological pathways. The sequence is that of Flagellar transcriptional regulator FlhD from Nitrosomonas europaea (strain ATCC 19718 / CIP 103999 / KCTC 2705 / NBRC 14298).